The primary structure comprises 500 residues: Glucose-1-phosphate adenylyltransferase large subunit, chloroplastic/amyloplastic (500 aa).

The transit peptide at 1–33 (RASPPSESRAPLRAPQRSATRQHQARQGPRRMC) directs the protein to the chloroplast. Residues 1 to 47 (RASPPSESRAPLRAPQRSATRQHQARQGPRRMCNGGRGPPYWTAGVT) form a disordered region.

This sequence belongs to the bacterial/plant glucose-1-phosphate adenylyltransferase family. Heterotetramer.

The protein resides in the plastid. It is found in the chloroplast. It localises to the amyloplast. It catalyses the reaction alpha-D-glucose 1-phosphate + ATP + H(+) = ADP-alpha-D-glucose + diphosphate. It functions in the pathway glycan biosynthesis; starch biosynthesis. With respect to regulation, insensitive to 3'phosphoglycerate and orthophosphate. Functionally, this protein plays a role in synthesis of starch. It catalyzes the synthesis of the activated glycosyl donor, ADP-glucose from Glc-1-P and ATP. The polypeptide is Glucose-1-phosphate adenylyltransferase large subunit, chloroplastic/amyloplastic (AGA.7) (Triticum aestivum (Wheat)).